An 83-amino-acid polypeptide reads, in one-letter code: Exodeoxyribonuclease 7 small subunit (83 aa).

This sequence belongs to the XseB family. In terms of assembly, heterooligomer composed of large and small subunits.

It is found in the cytoplasm. It carries out the reaction Exonucleolytic cleavage in either 5'- to 3'- or 3'- to 5'-direction to yield nucleoside 5'-phosphates.. Its function is as follows. Bidirectionally degrades single-stranded DNA into large acid-insoluble oligonucleotides, which are then degraded further into small acid-soluble oligonucleotides. This chain is Exodeoxyribonuclease 7 small subunit, found in Bradyrhizobium sp. (strain ORS 278).